A 561-amino-acid chain; its full sequence is DNA ligase B (561 aa).

K128 functions as the N6-AMP-lysine intermediate in the catalytic mechanism.

The protein belongs to the NAD-dependent DNA ligase family. LigB subfamily.

It carries out the reaction NAD(+) + (deoxyribonucleotide)n-3'-hydroxyl + 5'-phospho-(deoxyribonucleotide)m = (deoxyribonucleotide)n+m + AMP + beta-nicotinamide D-nucleotide.. In terms of biological role, catalyzes the formation of phosphodiester linkages between 5'-phosphoryl and 3'-hydroxyl groups in double-stranded DNA using NAD as a coenzyme and as the energy source for the reaction. This chain is DNA ligase B, found in Pseudomonas syringae pv. syringae (strain B728a).